The primary structure comprises 338 residues: Ferredoxin--NADP reductase (338 aa).

FAD-binding residues include Asp-32, Gln-40, Tyr-45, Val-85, Phe-120, Asp-287, and Thr-327.

Belongs to the ferredoxin--NADP reductase type 2 family. In terms of assembly, homodimer. FAD serves as cofactor.

It catalyses the reaction 2 reduced [2Fe-2S]-[ferredoxin] + NADP(+) + H(+) = 2 oxidized [2Fe-2S]-[ferredoxin] + NADPH. The polypeptide is Ferredoxin--NADP reductase (Wolbachia pipientis wMel).